The following is a 168-amino-acid chain: Coiled-coil domain-containing protein 200 (168 aa).

Residues 16–50 adopt a coiled-coil conformation; the sequence is LDRRRWLMAQQQQELQQKEQELKNHQEEEQQSEEK. The disordered stretch occupies residues 23–168; sequence MAQQQQELQQ…LKSTNYIQQW (146 aa). Positions 31-52 are enriched in basic and acidic residues; sequence QQKEQELKNHQEEEQQSEEKLQ. The segment covering 70–82 has biased composition (low complexity); it reads SQEQPQPSQQQPS. 2 stretches are compositionally biased toward pro residues: residues 83-94 and 104-117; these read VQPPSQPPPQPS and GPQP…PQPT. Composition is skewed to polar residues over residues 124-138 and 145-168; these read RCTQ…QDSQ and PCQS…IQQW.

The polypeptide is Coiled-coil domain-containing protein 200 (Homo sapiens (Human)).